Here is a 194-residue protein sequence, read N- to C-terminus: UPF0215 protein PF2042 (194 aa).

This sequence belongs to the UPF0215 family.

The chain is UPF0215 protein PF2042 from Pyrococcus furiosus (strain ATCC 43587 / DSM 3638 / JCM 8422 / Vc1).